We begin with the raw amino-acid sequence, 870 residues long: DNA polymerase kappa (870 aa).

In terms of domain architecture, UmuC spans 103–358; sequence IVHIDMDAFY…LPIRKVSGIG (256 aa). Mg(2+) contacts are provided by D107, D198, and E199. 2 UBZ4-type zinc fingers span residues 621–651 and 776–806; these read ILTCPVCFRAQGCISLEALNKHVDECLDGPS and ALVCPVCNVEQKTSDLTLFNVHVDVCLNKSF. Residues C624, C627, H642, C646, C779, C782, H797, and C801 each contribute to the Zn(2+) site. The interval 816 to 858 is disordered; that stretch reads NPVNQPKESSRSTGSSSGVQKAVTRTKRPGLMTKYSTSKKIKP.

It belongs to the DNA polymerase type-Y family. Interacts with REV1. Interacts with PCNA. Mg(2+) serves as cofactor. The cofactor is Mn(2+). In terms of tissue distribution, detected at low levels in testis, spleen, prostate and ovary. Detected at very low levels in kidney, colon, brain, heart, liver, lung, placenta, pancreas and peripheral blood leukocytes.

It localises to the nucleus. It carries out the reaction DNA(n) + a 2'-deoxyribonucleoside 5'-triphosphate = DNA(n+1) + diphosphate. Functionally, DNA polymerase specifically involved in DNA repair. Plays an important role in translesion synthesis, where the normal high-fidelity DNA polymerases cannot proceed and DNA synthesis stalls. Depending on the context, it inserts the correct base, but causes frequent base transitions, transversions and frameshifts. Lacks 3'-5' proofreading exonuclease activity. Forms a Schiff base with 5'-deoxyribose phosphate at abasic sites, but does not have lyase activity. This chain is DNA polymerase kappa (POLK), found in Homo sapiens (Human).